Reading from the N-terminus, the 325-residue chain is Protease HtpX homolog (325 aa).

A helical membrane pass occupies residues 20–40 (IGYLLGGGGGMMIALVIAVAM). Residue His-130 coordinates Zn(2+). Residue Glu-131 is part of the active site. His-134 serves as a coordination point for Zn(2+). 2 helical membrane passes run 145-165 (IVAT…FLGG) and 173-193 (VMGV…AMIV). Position 202 (Glu-202) interacts with Zn(2+). The segment at 288–325 (AMTARAAAPSQNSGPWGQRSDNAGGNSNGGSRYRGPWS) is disordered. Positions 306 to 325 (RSDNAGGNSNGGSRYRGPWS) are enriched in low complexity.

This sequence belongs to the peptidase M48B family. Requires Zn(2+) as cofactor.

The protein resides in the cell inner membrane. This is Protease HtpX homolog from Brucella suis (strain ATCC 23445 / NCTC 10510).